The sequence spans 522 residues: 2-isopropylmalate synthase (522 aa).

The 263-residue stretch at 5-267 (VIIFDTTLRD…ETGINAKEIH (263 aa)) folds into the Pyruvate carboxyltransferase domain. Mn(2+) is bound by residues aspartate 14, histidine 202, histidine 204, and asparagine 238. Residues 392-522 (QLQQLVVQSD…MQKNRELGGV (131 aa)) form a regulatory domain region.

Belongs to the alpha-IPM synthase/homocitrate synthase family. LeuA type 1 subfamily. Homodimer. Requires Mn(2+) as cofactor.

The protein resides in the cytoplasm. It catalyses the reaction 3-methyl-2-oxobutanoate + acetyl-CoA + H2O = (2S)-2-isopropylmalate + CoA + H(+). Its pathway is amino-acid biosynthesis; L-leucine biosynthesis; L-leucine from 3-methyl-2-oxobutanoate: step 1/4. Functionally, catalyzes the condensation of the acetyl group of acetyl-CoA with 3-methyl-2-oxobutanoate (2-ketoisovalerate) to form 3-carboxy-3-hydroxy-4-methylpentanoate (2-isopropylmalate). This Shewanella baltica (strain OS195) protein is 2-isopropylmalate synthase.